A 446-amino-acid polypeptide reads, in one-letter code: Mycosin-1 (446 aa).

The N-terminal stretch at 1-21 (MHRIFLITVALALLTASPASA) is a signal peptide. The segment at 24 to 43 (PPPIDPGALPPDVTGPDQPT) is disordered. The 324-residue stretch at 64–387 (PWSNTYLGVA…AGVIDAVAAL (324 aa)) folds into the Peptidase S8 domain. Active-site charge relay system residues include Asp-90, His-121, and Ser-332. A helical membrane pass occupies residues 419–439 (ITAVALVAVGLTLALGLGALA).

It belongs to the peptidase S8 family.

Its subcellular location is the cell membrane. May play a dual role in regulation of ESX-1 secretion and virulence. Acts as a protease that cleaves EspB. Essential for ESX-1 function, required for early replication in macrophages and full virulence in mice. This chain is Mycosin-1, found in Mycobacterium tuberculosis (strain ATCC 25618 / H37Rv).